Reading from the N-terminus, the 461-residue chain is Aspartyl/glutamyl-tRNA(Asn/Gln) amidotransferase subunit B (461 aa).

The protein belongs to the GatB/GatE family. GatB subfamily. In terms of assembly, heterotrimer of A, B and C subunits.

The catalysed reaction is L-glutamyl-tRNA(Gln) + L-glutamine + ATP + H2O = L-glutaminyl-tRNA(Gln) + L-glutamate + ADP + phosphate + H(+). It carries out the reaction L-aspartyl-tRNA(Asn) + L-glutamine + ATP + H2O = L-asparaginyl-tRNA(Asn) + L-glutamate + ADP + phosphate + 2 H(+). Its function is as follows. Allows the formation of correctly charged Asn-tRNA(Asn) or Gln-tRNA(Gln) through the transamidation of misacylated Asp-tRNA(Asn) or Glu-tRNA(Gln) in organisms which lack either or both of asparaginyl-tRNA or glutaminyl-tRNA synthetases. The reaction takes place in the presence of glutamine and ATP through an activated phospho-Asp-tRNA(Asn) or phospho-Glu-tRNA(Gln). In Methanopyrus kandleri (strain AV19 / DSM 6324 / JCM 9639 / NBRC 100938), this protein is Aspartyl/glutamyl-tRNA(Asn/Gln) amidotransferase subunit B.